Here is a 186-residue protein sequence, read N- to C-terminus: Putative CTD phosphatase-like protein 355R (186 aa).

Positions 2 to 182 (ENNKKKLILL…TELLKVQKTL (181 aa)) constitute an FCP1 homology domain.

This sequence belongs to the IIV-6 355R family.

In terms of biological role, may function as a phosphatase. This Aedes vexans (Inland floodwater mosquito) protein is Putative CTD phosphatase-like protein 355R.